We begin with the raw amino-acid sequence, 359 residues long: Mannose-1-phosphate guanylyltransferase catalytic subunit beta (359 aa).

Residues lysine 2–proline 221 are substrate-binding domain. Residue aspartate 109 participates in GDP-alpha-D-mannose binding. Aspartate 109 provides a ligand contact to Mg(2+). Lysine 161 is a catalytic residue. Aspartate 217 provides a ligand contact to GDP-alpha-D-mannose. Residue aspartate 217 participates in Mg(2+) binding. Residues alanine 244 to methionine 359 form a hexapeptide repeat domain region.

The protein belongs to the transferase hexapeptide repeat family. Component of the GMPPA-GMPPB mannose-1-phosphate guanylyltransferase complex composed of 4 GMPPA subunits and 8 gmppB subunits; the complex is organized into three layers, a central layer made up of 2 gmppA dimers sandwiched between two layers each made up of 2 gmppB dimers. gmppB catalytic activity is reduced when part of the complex and binding of GDP-alpha-D-Mannose by gmppA induces allosteric feedback inhibition of gmppB. Mg(2+) serves as cofactor.

It catalyses the reaction alpha-D-mannose 1-phosphate + GTP + H(+) = GDP-alpha-D-mannose + diphosphate. It participates in nucleotide-sugar biosynthesis; GDP-alpha-D-mannose biosynthesis; GDP-alpha-D-mannose from alpha-D-mannose 1-phosphate (GTP route): step 1/1. With respect to regulation, enzyme activity is reduced by incorporation into the GMPPA-GMPPB mannose-1-phosphate guanylyltransferase complex. Allosterically inhibited, when part of the GMPPA-GMPPB complex, by GDP-alpha-D-mannose binding to GMPPA. Its function is as follows. Catalytic subunit of the GMPPA-GMPPB mannose-1-phosphate guanylyltransferase complex. Catalyzes the formation of GDP-mannose, an essential precursor of glycan moieties of glycoproteins and glycolipids. Can catalyze the reverse reaction in vitro. Together with GMPPA regulates GDP-alpha-D-mannose levels. This chain is Mannose-1-phosphate guanylyltransferase catalytic subunit beta (gmppB), found in Dictyostelium discoideum (Social amoeba).